The chain runs to 671 residues: DNA ligase (671 aa).

Residues 32–36 (DAEYD), 81–82 (SL), and Glu113 contribute to the NAD(+) site. The active-site N6-AMP-lysine intermediate is Lys115. NAD(+) contacts are provided by Arg136, Glu173, Lys290, and Lys314. Zn(2+) contacts are provided by Cys408, Cys411, Cys426, and Cys432. Residues 593–671 (EIDSPFAGKT…EAEMLRLFGE (79 aa)) form the BRCT domain.

This sequence belongs to the NAD-dependent DNA ligase family. LigA subfamily. Mg(2+) is required as a cofactor. It depends on Mn(2+) as a cofactor.

The catalysed reaction is NAD(+) + (deoxyribonucleotide)n-3'-hydroxyl + 5'-phospho-(deoxyribonucleotide)m = (deoxyribonucleotide)n+m + AMP + beta-nicotinamide D-nucleotide.. Its function is as follows. DNA ligase that catalyzes the formation of phosphodiester linkages between 5'-phosphoryl and 3'-hydroxyl groups in double-stranded DNA using NAD as a coenzyme and as the energy source for the reaction. It is essential for DNA replication and repair of damaged DNA. This is DNA ligase from Enterobacter sp. (strain 638).